A 308-amino-acid polypeptide reads, in one-letter code: Olfactory receptor 13H1 (308 aa).

Topologically, residues 1–25 (MAMDNVTAVFQFLLIGISNYPQWRD) are extracellular. N-linked (GlcNAc...) asparagine glycosylation is present at Asn5. The helical transmembrane segment at 26–46 (TFFTLVLIIYLSTLLGNGFMI) threads the bilayer. Residues 47–54 (FLIHFDPN) are Cytoplasmic-facing. A helical transmembrane segment spans residues 55 to 75 (LHTPIYFFLSNLSFLDLCYGT). Over 76–99 (ASMPQALVHCFSTHPYLSYPRCLA) the chain is Extracellular. The cysteines at positions 97 and 188 are disulfide-linked. A helical transmembrane segment spans residues 100–120 (QTSVSLALATAECLLLAAMAY). The Cytoplasmic portion of the chain corresponds to 121-139 (DRVVAISNPLRYSVVMNGP). Residues 140-159 (VCVCLVATSWGTSLVLTAML) form a helical membrane-spanning segment. The Extracellular segment spans residues 160-196 (ILSLRLHFCGANVINHFACEILSLIKLTCSDTSLNEF). The helical transmembrane segment at 197–216 (MILITSIFTLLLPFGFVLLS) threads the bilayer. The Cytoplasmic segment spans residues 217–236 (YIRIAMAIIRIRSLQGRLKA). The helical transmembrane segment at 237-257 (FTTCGSHLTVVTIFYGSAISM) threads the bilayer. The Extracellular portion of the chain corresponds to 258-270 (YMKTQSKSYPDQD). The helical transmembrane segment at 271-291 (KFISVFYGALTPMLNPLIYSL) threads the bilayer. Over 292–308 (RKKDVKRAIRKVMLKRT) the chain is Cytoplasmic.

The protein belongs to the G-protein coupled receptor 1 family.

It is found in the cell membrane. In terms of biological role, odorant receptor. The chain is Olfactory receptor 13H1 (OR13H1) from Homo sapiens (Human).